A 339-amino-acid chain; its full sequence is Dihydroorotate dehydrogenase (quinone) (339 aa).

FMN-binding positions include 61 to 65 (AGLDK) and threonine 85. Lysine 65 serves as a coordination point for substrate. Substrate is bound at residue 110–114 (NRMGF). Asparagine 138 and asparagine 171 together coordinate FMN. Asparagine 171 lines the substrate pocket. Catalysis depends on serine 174, which acts as the Nucleophile. A substrate-binding site is contributed by asparagine 176. Residues lysine 216 and threonine 244 each coordinate FMN. Position 245–246 (245–246 (NT)) interacts with substrate. FMN contacts are provided by residues glycine 267, glycine 296, and 317–318 (YS).

The protein belongs to the dihydroorotate dehydrogenase family. Type 2 subfamily. Monomer. FMN serves as cofactor.

Its subcellular location is the cell membrane. It carries out the reaction (S)-dihydroorotate + a quinone = orotate + a quinol. It functions in the pathway pyrimidine metabolism; UMP biosynthesis via de novo pathway; orotate from (S)-dihydroorotate (quinone route): step 1/1. Functionally, catalyzes the conversion of dihydroorotate to orotate with quinone as electron acceptor. This Pseudomonas fluorescens (strain Pf0-1) protein is Dihydroorotate dehydrogenase (quinone).